A 542-amino-acid chain; its full sequence is Sialate O-acetylesterase (542 aa).

Residues 1–23 (MVSPRPVGLMLLLIIARVSRGAG) form the signal peptide. Asparagine 107, asparagine 138, asparagine 188, asparagine 294, asparagine 357, asparagine 428, asparagine 449, and asparagine 463 each carry an N-linked (GlcNAc...) asparagine glycan.

As to quaternary structure, disulfide-linked heterodimer of a small subunit and a large subunit. Post-translationally, the two subunits are derived from a single precursor by proteolytic cleavage. Glycosylated. In terms of tissue distribution, widely expressed.

It is found in the lysosome. The enzyme catalyses N-acetyl-9-O-acetylneuraminate + H2O = N-acetylneuraminate + acetate + H(+). It carries out the reaction an Ac-O-9-sialoglycoconjugate + H2O = a sialoglycoconjugate + acetate + H(+). Inhibited by diisopropyl fluorophosphate and diethyl-P-nitrophenyl phosphate. Functionally, catalyzes the removal of O-acetyl ester groups from position 9 of the free diacetylated sialate N-acetyl-9-O-acetylneuraminate (Neu5,9Ac2) in the cytosol and of the diacetylated sialate residues of sialylglycoconjugates in the lysosomes. Together with the sialate-O-acetyltransferase they regulate the balance of acetylated sialoglycoconjugates, key players in various processes such as cell-cell interactions, host-pathogen recognition, and tumor antigenicity. The protein is Sialate O-acetylesterase (Siae) of Rattus norvegicus (Rat).